Reading from the N-terminus, the 434-residue chain is Trigger factor (434 aa).

The PPIase FKBP-type domain maps to 161–246; the sequence is EDRVTIDFTG…LKKVEERELP (86 aa).

Belongs to the FKBP-type PPIase family. Tig subfamily.

It localises to the cytoplasm. It catalyses the reaction [protein]-peptidylproline (omega=180) = [protein]-peptidylproline (omega=0). Involved in protein export. Acts as a chaperone by maintaining the newly synthesized protein in an open conformation. Functions as a peptidyl-prolyl cis-trans isomerase. The sequence is that of Trigger factor from Pectobacterium carotovorum subsp. carotovorum (strain PC1).